The following is a 159-amino-acid chain: MADS-box transcription factor 23 (159 aa).

The MADS-box domain occupies 1–61 (MGRGKIEIKR…SRLYDFASSS (61 aa)). One can recognise a K-box domain in the interval 86 to 159 (AKLWQQEAAS…QELSRKVVTT (74 aa)).

In terms of tissue distribution, expressed in seedling roots and developing seeds.

It localises to the nucleus. Probable transcription factor. The polypeptide is MADS-box transcription factor 23 (MADS23) (Oryza sativa subsp. japonica (Rice)).